Here is a 567-residue protein sequence, read N- to C-terminus: Periplasmic [NiFe] hydrogenase large subunit (567 aa).

Glu-62 serves as a coordination point for Mg(2+). Ni(2+) contacts are provided by Cys-81 and Cys-84. Cys-84 contributes to the Fe cation binding site. Leu-498 serves as a coordination point for Mg(2+). Residues Cys-546 and Cys-549 each contribute to the Ni(2+) site. Position 549 (Cys-549) interacts with Fe cation. His-552 is a binding site for Mg(2+). Residues 553 to 567 (VIDGHTNEVHKFRIL) constitute a propeptide that is removed on maturation.

It belongs to the [NiFe]/[NiFeSe] hydrogenase large subunit family. Heterodimer of a large and a small subunit. Ni(2+) serves as cofactor. It depends on Fe cation as a cofactor.

It is found in the periplasm. It carries out the reaction 2 Fe(III)-[cytochrome c3] + H2 = 2 Fe(II)-[cytochrome c3] + 2 H(+). Catalyzes the reversible oxidoreduction of molecular hydrogen, in conjunction with a specific electron acceptor, cytochrome c3. The sequence is that of Periplasmic [NiFe] hydrogenase large subunit (hydB) from Nitratidesulfovibrio vulgaris (strain DSM 19637 / Miyazaki F) (Desulfovibrio vulgaris).